The primary structure comprises 126 residues: Aspartate 1-decarboxylase (126 aa).

Residue Ser-25 is the Schiff-base intermediate with substrate; via pyruvic acid of the active site. Position 25 is a pyruvic acid (Ser) (Ser-25). Thr-57 lines the substrate pocket. Residue Tyr-58 is the Proton donor of the active site. 73-75 (GAA) serves as a coordination point for substrate.

Belongs to the PanD family. As to quaternary structure, heterooctamer of four alpha and four beta subunits. Pyruvate is required as a cofactor. Post-translationally, is synthesized initially as an inactive proenzyme, which is activated by self-cleavage at a specific serine bond to produce a beta-subunit with a hydroxyl group at its C-terminus and an alpha-subunit with a pyruvoyl group at its N-terminus.

It is found in the cytoplasm. The catalysed reaction is L-aspartate + H(+) = beta-alanine + CO2. Its pathway is cofactor biosynthesis; (R)-pantothenate biosynthesis; beta-alanine from L-aspartate: step 1/1. Functionally, catalyzes the pyruvoyl-dependent decarboxylation of aspartate to produce beta-alanine. This is Aspartate 1-decarboxylase from Pectobacterium carotovorum subsp. carotovorum (strain PC1).